A 238-amino-acid polypeptide reads, in one-letter code: Dolichyldiphosphatase 1 (238 aa).

4 consecutive transmembrane segments (helical) span residues 33 to 53 (LAYL…LIIF), 100 to 120 (PSSH…FLYL), 130 to 150 (FLDL…AFLV), and 162 to 182 (WSQV…WFIF).

Belongs to the dolichyldiphosphatase family.

Its subcellular location is the endoplasmic reticulum membrane. It carries out the reaction a di-trans,poly-cis-dolichyl diphosphate + H2O = a di-trans,poly-cis-dolichyl phosphate + phosphate + H(+). The protein operates within protein modification; protein glycosylation. Its function is as follows. Required for efficient N-glycosylation. Necessary for maintaining optimal levels of dolichol-linked oligosaccharides. Hydrolyzes dolichyl pyrophosphate at a very high rate and dolichyl monophosphate at a much lower rate. Does not act on phosphatidate. This is Dolichyldiphosphatase 1 (DOLPP1) from Plecturocebus moloch (Dusky titi monkey).